A 542-amino-acid chain; its full sequence is L-ornithine N(5)-monooxygenase (542 aa).

FAD is bound by residues 45–53 (EKHEVFRWH) and glutamine 64. Residue lysine 69 coordinates substrate. 218–221 (SGQS) is a binding site for NADP(+). Substrate is bound by residues 263–266 (NEIF) and asparagine 294. 294–296 (NYS) lines the NADP(+) pocket. The interval 443–472 (FFHDSSPSTASSSTVSTPPTSPETSRFSSP) is disordered. The segment covering 447 to 472 (SSPSTASSSTVSTPPTSPETSRFSSP) has biased composition (low complexity). 518–520 (TLL) provides a ligand contact to FAD. Residue serine 521 participates in substrate binding.

It belongs to the lysine N(6)-hydroxylase/L-ornithine N(5)-oxygenase family. Homotetramer. The cofactor is FAD.

It catalyses the reaction L-ornithine + NADPH + O2 = N(5)-hydroxy-L-ornithine + NADP(+) + H2O. The catalysed reaction is L-ornithine + NADH + O2 = N(5)-hydroxy-L-ornithine + NAD(+) + H2O. The protein operates within siderophore biosynthesis. Functionally, L-ornithine N(5)-monooxygenase; part of the gene cluster that mediates the biosynthesis of coprinoferrin, an acylated tripeptide hydroxamate siderophore. The biosynthesis of coprinoferrin depends on the hydroxylation of ornithine to N(5)-hydroxyornithine, catalyzed by the monooxygenase cpf2. The second step, the acylation of N(5)-hydroxy-L-ornithine to yield N(5)-hexanoyl-N(5)-hydroxyl-L-ornithine is catalyzed by a not yet identified acyltransferase. Finally, assembly of coprinoferrin is catalyzed by the nonribosomal peptide synthase (NRPS) cpf1 via amide bond formation between three N(5)-hexanoyl-N(5)-hydroxyl-L-ornithine molecules to release the linear trimer. Interestingly, proteins seemingly not directly related to biosynthesis, such as transcription factors, replication factors, and autophagy-related proteins, are conserved among the clusters homologous to the coprinoferrin cluster, suggesting that the cluster may also play developmental and cell biological functions. The polypeptide is L-ornithine N(5)-monooxygenase (Coprinopsis cinerea (strain Okayama-7 / 130 / ATCC MYA-4618 / FGSC 9003) (Inky cap fungus)).